We begin with the raw amino-acid sequence, 58 residues long: uncharacterized protein (58 aa).

Helical transmembrane passes span 5–25 (IAFE…IIAE) and 32–52 (WIVV…FKMI).

Its subcellular location is the cell membrane. This is an uncharacterized protein from Methanocaldococcus jannaschii (strain ATCC 43067 / DSM 2661 / JAL-1 / JCM 10045 / NBRC 100440) (Methanococcus jannaschii).